The following is a 258-amino-acid chain: Short-chain dehydrogenase reductase 3c (258 aa).

An NAD(+)-binding site is contributed by 12-36 (IITGGASGIGADAARLFTDHGAKVV). A substrate-binding site is contributed by Ser144. The active-site Proton acceptor is the Tyr156.

It belongs to the short-chain dehydrogenases/reductases (SDR) family.

The protein is Short-chain dehydrogenase reductase 3c (SDR3c) of Arabidopsis thaliana (Mouse-ear cress).